Reading from the N-terminus, the 564-residue chain is uncharacterized protein (564 aa).

Residues 1 to 17 are compositionally biased toward polar residues; the sequence is MRRPSTASLTRTPSRAS. Positions 1-564 are disordered; sequence MRRPSTASLT…ASTPSSEVIS (564 aa). 2 stretches are compositionally biased toward low complexity: residues 79–97 and 114–134; these read SPRT…RASP and SPTG…ASPT. A compositionally biased stretch (polar residues) spans 153 to 168; it reads RSPSTASLTRTPSRAS. The segment covering 170–179 has biased composition (low complexity); it reads TRWPPRASPT. Over residues 250–271 the composition is skewed to pro residues; it reads GSPPRASPMTPPRASPRTPPRA. The span at 272–299 shows a compositional bias: low complexity; that stretch reads SPTTTPSRASLTRTPSWASPTTTPSRAS. A compositionally biased stretch (polar residues) spans 318–351; that stretch reads PTGTPSRASPTGTPSRASLTGSPSRASLTGTPSR. The span at 378–416 shows a compositional bias: low complexity; that stretch reads RASLTGTSSTASLTRTPSRASLTRTQSSSSLTRTPSMAS. Residues 467 to 564 are compositionally biased toward polar residues; it reads SRASLTRTPS…ASTPSSEVIS (98 aa).

This is an uncharacterized protein from Homo sapiens (Human).